The primary structure comprises 192 residues: MAGLRLIVGLGNPGSEHARTRHNAGFHFVEALAEKAGARWNVDSKLFGETAKVEIAGQTVWLLKPATFMNLSGKSVTAAQRFWKIEPEETLLAHDELDLAPGVARLKFDGGHGGQNGLRDTIRLLGHGKFHRLRVGIGHPGHKDRVVGWVLGRPSKEDDVLIARAIDDAIDVMPLAVQGDFSEAMKRLHTPK.

His17 serves as a coordination point for tRNA. Catalysis depends on His22, which acts as the Proton acceptor. TRNA contacts are provided by Phe68, Asn70, and Asn116.

It belongs to the PTH family. Monomer.

It is found in the cytoplasm. The catalysed reaction is an N-acyl-L-alpha-aminoacyl-tRNA + H2O = an N-acyl-L-amino acid + a tRNA + H(+). Hydrolyzes ribosome-free peptidyl-tRNAs (with 1 or more amino acids incorporated), which drop off the ribosome during protein synthesis, or as a result of ribosome stalling. Its function is as follows. Catalyzes the release of premature peptidyl moieties from peptidyl-tRNA molecules trapped in stalled 50S ribosomal subunits, and thus maintains levels of free tRNAs and 50S ribosomes. This is Peptidyl-tRNA hydrolase from Stenotrophomonas maltophilia (strain K279a).